Consider the following 385-residue polypeptide: S-adenosylmethionine synthase (385 aa).

His-16 contacts ATP. Asp-18 is a Mg(2+) binding site. Glu-44 contributes to the K(+) binding site. L-methionine is bound by residues Glu-57 and Gln-100. The interval 100–110 is flexible loop; it reads QSPDINQGVDR. ATP contacts are provided by residues 164–166, 230–231, Asp-239, 245–246, Ala-262, and Lys-266; these read DGK, KF, and RK. Asp-239 provides a ligand contact to L-methionine. Lys-270 serves as a coordination point for L-methionine.

The protein belongs to the AdoMet synthase family. In terms of assembly, homotetramer; dimer of dimers. Mg(2+) serves as cofactor. The cofactor is K(+).

Its subcellular location is the cytoplasm. It carries out the reaction L-methionine + ATP + H2O = S-adenosyl-L-methionine + phosphate + diphosphate. It functions in the pathway amino-acid biosynthesis; S-adenosyl-L-methionine biosynthesis; S-adenosyl-L-methionine from L-methionine: step 1/1. Functionally, catalyzes the formation of S-adenosylmethionine (AdoMet) from methionine and ATP. The overall synthetic reaction is composed of two sequential steps, AdoMet formation and the subsequent tripolyphosphate hydrolysis which occurs prior to release of AdoMet from the enzyme. The chain is S-adenosylmethionine synthase from Helicobacter pylori (strain P12).